The chain runs to 110 residues: Quaternary ammonium compound-resistance protein QacF (110 aa).

The next 4 helical transmembrane spans lie at 1–21 (MKNW…TSAL), 31–51 (VPSV…SLAL), 58–78 (IAYA…AWIF), and 85–105 (FWAF…NLLS).

The protein belongs to the drug/metabolite transporter (DMT) superfamily. Small multidrug resistance (SMR) (TC 2.A.7.1) family.

The protein resides in the cell membrane. Functionally, multidrug exporter. Is implicated for the resistance to bacteriocidal quaternary ammonium compounds. The sequence is that of Quaternary ammonium compound-resistance protein QacF (qacF) from Klebsiella aerogenes (Enterobacter aerogenes).